An 88-amino-acid polypeptide reads, in one-letter code: U-scoloptoxin(XY)-Er1a (88 aa).

The first 24 residues, 1–24 (MASQVVLSFALVVVLAVFVGQVDS), serve as a signal peptide directing secretion. The segment at 66-88 (RPELSPGAWDDSSEEKDNEASLA) is disordered. A propeptide spanning residues 79-88 (EEKDNEASLA) is cleaved from the precursor.

This sequence belongs to the scoloptoxin-XY family. Post-translationally, contains 3 disulfide bonds. In terms of tissue distribution, expressed by the venom gland.

The protein resides in the secreted. The chain is U-scoloptoxin(XY)-Er1a from Ethmostigmus rubripes (Giant centipede).